The primary structure comprises 439 residues: MTKFPRWLAMLVGLLFPLSALTQQQGLTIDIVGGNTAATPIAVLPMPYHDSVGAPATDVSSVVAADLNRSGQFRTLPLGQIIERPTHGSEIRFPTWQALKQDYIVVGRVLDARQGTYRVEYELFDVRNGKRMLGLAMTARASAMRDVAHQMADAIYEKITGLRGAFFTRIAYVTASGSHGAMRYALMVADSDGYNPQTIVRSAEPLLSPDWSPDGKKLAYVSFEKGGSSIYIQDIATGSRELVSSFRGINAAPSFAPDGHRIALSLSRSGNPEIYVMDLVSKQLIQLTNSFGIDTEPAWSSDGKFIYFTSDRGGRPQIYKVASVGGTATRVTFQGNYNATTSVSYDDKKIVVAQGSGNVYRIAMMDQSSGSTVWNTLSTGSLDESPSFAPNASMVLYAAREGGRGVLYAVSADARVRQRLVSVDSDVREPAWGPYRSVH.

Positions 1–22 (MTKFPRWLAMLVGLLFPLSALT) are cleaved as a signal peptide.

The protein belongs to the TolB family. As to quaternary structure, the Tol-Pal system is composed of five core proteins: the inner membrane proteins TolA, TolQ and TolR, the periplasmic protein TolB and the outer membrane protein Pal. They form a network linking the inner and outer membranes and the peptidoglycan layer.

The protein localises to the periplasm. In terms of biological role, part of the Tol-Pal system, which plays a role in outer membrane invagination during cell division and is important for maintaining outer membrane integrity. The polypeptide is Tol-Pal system protein TolB (Xylella fastidiosa (strain 9a5c)).